Here is a 671-residue protein sequence, read N- to C-terminus: TOM1-like protein 6 (671 aa).

Alanine 2 bears the N-acetylalanine mark. Residues 15–144 (ATSDLLLGPD…ELRRSGVEFP (130 aa)) form the VHS domain. Serine 147 carries the phosphoserine modification. The 89-residue stretch at 229 to 317 (EVEGLSLSSI…LLAKHDAIAS (89 aa)) folds into the GAT domain. Disordered stretches follow at residues 320–620 (PLPV…VGQK) and 636–671 (GSAD…RKMI). The span at 334 to 362 (ASKPADSSPKSSEAKDSSSIAGSSSPIPA) shows a compositional bias: low complexity. Residues 372 to 382 (DEEYEEEEDEF) show a composition bias toward acidic residues. Positions 395-405 (SVTTDPTSLES) are enriched in polar residues. Low complexity predominate over residues 407-417 (NAASNALALAL). Over residues 444-459 (STPPAPSSQPSPPPPA) the composition is skewed to pro residues. The segment covering 483–554 (AQQQQPQQPQ…QPSTRPQNPY (72 aa)) has biased composition (low complexity). Composition is skewed to polar residues over residues 562–598 (ASTS…NSFP) and 605–616 (QATSTASNSGVS). At serine 596 the chain carries Phosphoserine. Positions 647-663 (NSSNGSQNLSGSQTQQS) are enriched in low complexity.

The protein belongs to the TOM1 family. As to expression, ubiquitously expressed.

The protein resides in the endosome. The protein localises to the multivesicular body. It localises to the cytoplasm. Its subcellular location is the early endosome membrane. Functionally, acts as a gatekeeper for degradative protein sorting to the vacuole. Plays a role in recognition of ubiquitinated PIN2 auxin carrier at the plasma membrane and further to its endocytic sorting. Binds ubiquitin in vitro. Might contribute to the loading of the ESCRT machinery. The polypeptide is TOM1-like protein 6 (Arabidopsis thaliana (Mouse-ear cress)).